Consider the following 154-residue polypeptide: 6,7-dimethyl-8-ribityllumazine synthase (154 aa).

5-amino-6-(D-ribitylamino)uracil contacts are provided by residues Phe22, 56-58, and 80-82; these read AFE and AVI. Residue 85–86 coordinates (2S)-2-hydroxy-3-oxobutyl phosphate; the sequence is AT. His88 acts as the Proton donor in catalysis. 5-amino-6-(D-ribitylamino)uracil is bound at residue Phe113. Arg127 contributes to the (2S)-2-hydroxy-3-oxobutyl phosphate binding site.

Belongs to the DMRL synthase family.

The catalysed reaction is (2S)-2-hydroxy-3-oxobutyl phosphate + 5-amino-6-(D-ribitylamino)uracil = 6,7-dimethyl-8-(1-D-ribityl)lumazine + phosphate + 2 H2O + H(+). It functions in the pathway cofactor biosynthesis; riboflavin biosynthesis; riboflavin from 2-hydroxy-3-oxobutyl phosphate and 5-amino-6-(D-ribitylamino)uracil: step 1/2. Functionally, catalyzes the formation of 6,7-dimethyl-8-ribityllumazine by condensation of 5-amino-6-(D-ribitylamino)uracil with 3,4-dihydroxy-2-butanone 4-phosphate. This is the penultimate step in the biosynthesis of riboflavin. In Syntrophobacter fumaroxidans (strain DSM 10017 / MPOB), this protein is 6,7-dimethyl-8-ribityllumazine synthase.